The primary structure comprises 364 residues: DNA replication and repair protein RecF (364 aa).

30–37 (GNNAQGKT) contributes to the ATP binding site.

This sequence belongs to the RecF family.

It localises to the cytoplasm. In terms of biological role, the RecF protein is involved in DNA metabolism; it is required for DNA replication and normal SOS inducibility. RecF binds preferentially to single-stranded, linear DNA. It also seems to bind ATP. The protein is DNA replication and repair protein RecF of Clostridium botulinum (strain 657 / Type Ba4).